A 624-amino-acid polypeptide reads, in one-letter code: Chaperone protein HtpG (624 aa).

Residues 1–336 are a; substrate-binding; the sequence is MKGQETRGFQ…SNDLPLNVSR (336 aa). A b region spans residues 337–552; that stretch reads EILQDSTVTR…ADEMSTQMAK (216 aa). The tract at residues 553 to 624 is c; sequence LFAAAGQSVP…IRRMNQLLVS (72 aa).

It belongs to the heat shock protein 90 family. In terms of assembly, homodimer.

It is found in the cytoplasm. Functionally, molecular chaperone. Has ATPase activity. This chain is Chaperone protein HtpG, found in Salmonella typhi.